The following is a 231-amino-acid chain: Large ribosomal subunit protein uL1 (231 aa).

The protein belongs to the universal ribosomal protein uL1 family. In terms of assembly, part of the 50S ribosomal subunit.

Binds directly to 23S rRNA. The L1 stalk is quite mobile in the ribosome, and is involved in E site tRNA release. In terms of biological role, protein L1 is also a translational repressor protein, it controls the translation of the L11 operon by binding to its mRNA. In Lactobacillus delbrueckii subsp. bulgaricus (strain ATCC 11842 / DSM 20081 / BCRC 10696 / JCM 1002 / NBRC 13953 / NCIMB 11778 / NCTC 12712 / WDCM 00102 / Lb 14), this protein is Large ribosomal subunit protein uL1.